Reading from the N-terminus, the 205-residue chain is Mitotic spindle assembly checkpoint protein MAD2A (205 aa).

An N-acetylalanine modification is found at A2. The region spanning 14-197 is the HORMA domain; that stretch reads RGSAEIVAEF…TTIHKVNSMV (184 aa). S130, S170, S185, and S195 each carry phosphoserine. The required for assuming the closed conformation and for interaction with CDC20 stretch occupies residues 195–205; it reads SMVAYKTPVND.

This sequence belongs to the MAD2 family. Monomer and homodimer. Heterodimerizes with MAD2L1 in order to form a tetrameric MAD1L1-MAD2L1 core complex. In the closed and open conformation, interacts with MAD1L1. Formation of a heterotetrameric core complex containing two molecules each of MAD1L1 and of MAD2L1 promotes binding of another molecule of MAD2L1 to each MAD2L1, resulting in a heterohexamer. Interacts with MAD2L1BP. Interacts with ADAM17/TACE. Interacts with CDC20. Dimeric MAD2L1 in the closed conformation interacts with CDC20. Monomeric MAD2L1 in the open conformation does not interact with CDC20. CDC20 competes with MAD1L1 for MAD2L1 binding. In the closed conformation, interacts with BUB1B. Interacts with TTK. Interacts with TPR. Binds to UBD (via ubiquitin-like 1 domain) during mitosis. Interacts with isoform 1 and isoform 2 of NEK2. Interacts with HSF1; this interaction occurs in mitosis. Phosphorylated on multiple serine residues. The level of phosphorylation varies during the cell cycle and is highest during mitosis. Phosphorylation abolishes interaction with MAD1L1 and reduces interaction with CDC20. Phosphorylated by NEK2.

Its subcellular location is the nucleus. It localises to the chromosome. The protein resides in the centromere. The protein localises to the kinetochore. It is found in the cytoplasm. Its subcellular location is the cytoskeleton. It localises to the spindle pole. Its function is as follows. Component of the spindle-assembly checkpoint that prevents the onset of anaphase until all chromosomes are properly aligned at the metaphase plate. In the closed conformation (C-MAD2) forms a heterotetrameric complex with MAD1L1 at unattached kinetochores during prometaphase, and recruits an open conformation of MAD2L1 (O-MAD2) which then promotes the conversion of O-MAD2 to C-MAD2. Required for the execution of the mitotic checkpoint which monitors the process of kinetochore-spindle attachment and inhibits the activity of the anaphase promoting complex by sequestering CDC20 until all chromosomes are aligned at the metaphase plate. This chain is Mitotic spindle assembly checkpoint protein MAD2A (Mad2l1), found in Mus musculus (Mouse).